The chain runs to 292 residues: Mycothiol acetyltransferase (292 aa).

N-acetyltransferase domains follow at residues 13-168 and 159-292; these read ALDR…KWLQ and KSVA…VYEK. Glu-40 lines the 1D-myo-inositol 2-(L-cysteinylamino)-2-deoxy-alpha-D-glucopyranoside pocket. 77 to 79 contributes to the acetyl-CoA binding site; it reads LAV. Glu-179, Lys-218, and Glu-226 together coordinate 1D-myo-inositol 2-(L-cysteinylamino)-2-deoxy-alpha-D-glucopyranoside. Acetyl-CoA-binding positions include 230-232 and 237-243; these read VGL and RGRGLGD. Residue Tyr-264 coordinates 1D-myo-inositol 2-(L-cysteinylamino)-2-deoxy-alpha-D-glucopyranoside.

Belongs to the acetyltransferase family. MshD subfamily. Monomer.

The enzyme catalyses 1D-myo-inositol 2-(L-cysteinylamino)-2-deoxy-alpha-D-glucopyranoside + acetyl-CoA = mycothiol + CoA + H(+). Its function is as follows. Catalyzes the transfer of acetyl from acetyl-CoA to desacetylmycothiol (Cys-GlcN-Ins) to form mycothiol. The sequence is that of Mycothiol acetyltransferase from Corynebacterium glutamicum (strain ATCC 13032 / DSM 20300 / JCM 1318 / BCRC 11384 / CCUG 27702 / LMG 3730 / NBRC 12168 / NCIMB 10025 / NRRL B-2784 / 534).